The sequence spans 449 residues: Protein tweety homolog 1-A (449 aa).

Residues 1–43 are Extracellular-facing; that stretch reads MSTSHGYRASWWTNILHQVPHTNFQFEVVDNQFAPQEWPYQQA. Residues 44-64 traverse the membrane as a helical segment; sequence LLFLASIAGLCLAISLILICV. Residues 65–86 lie on the Cytoplasmic side of the membrane; sequence YLIRFCCCASQEDDDSKNHRVC. Residues 87–107 form a helical membrane-spanning segment; that stretch reads CVTWSCVAAVIICCAGIGIGF. The Extracellular segment spans residues 108–212; that stretch reads YGNSETNDGV…QVNFIEDYRW (105 aa). An N-linked (GlcNAc...) asparagine glycan is attached at N128. A helical transmembrane segment spans residues 213-233; the sequence is LAYILLLLLDLIICLFTLLGL. The Cytoplasmic portion of the chain corresponds to 234–238; it reads AKRIK. The chain crosses the membrane as a helical span at residues 239–259; that stretch reads WLVIVMTVVSFFVLLLSWGSM. Residues 260–388 are Extracellular-facing; sequence GLEMATAVGL…LKGLCYDGME (129 aa). 2 disulfides stabilise this stretch: C273–C383 and C301–C368. N-linked (GlcNAc...) asparagine glycosylation is found at N282 and N353. The chain crosses the membrane as a helical span at residues 389-409; that stretch reads GILFLLLFSFLSALSFTAAVC. Residues 410–449 are Cytoplasmic-facing; it reads SLPRAWKRFQNRDLDYDDMDEDDPFNPQESKRFVQWQSSI.

Belongs to the tweety family. Homotetramer; disulfide-linked. Homodimer.

Its subcellular location is the cell membrane. The catalysed reaction is chloride(in) = chloride(out). It carries out the reaction L-glutamate(out) = L-glutamate(in). In terms of biological role, may act as a calcium-independent, swelling-dependent volume-regulated anion channel (VRAC-swell) which plays a pivotal role in the process of regulatory volume decrease (RVD) in the brain through the efflux of anions like chloride and organic osmolytes like glutamate. The chain is Protein tweety homolog 1-A (ttyh1-a) from Xenopus laevis (African clawed frog).